The chain runs to 106 residues: Secreted RxLR effector protein 18 (106 aa).

Positions 1–17 (MRGSTAMLLAAIALFSS) are cleaved as a signal peptide. Residues 28–39 (RTLRSFEELEER) carry the RxLR-dEER motif.

It belongs to the RxLR effector family.

It is found in the secreted. The protein resides in the host cell. In terms of biological role, effector that may act as a suppressor of cell death to interrupt plant immunity. I. In Plasmopara viticola (Downy mildew of grapevine), this protein is Secreted RxLR effector protein 18.